The chain runs to 246 residues: Large ribosomal subunit protein uL3 (246 aa).

2 disordered regions span residues 140–162 (SHRS…NKKM) and 215–246 (DVPL…EENA). Gln-151 bears the N5-methylglutamine mark. The segment covering 234–246 (EAAPEAPASEENA) has biased composition (low complexity).

The protein belongs to the universal ribosomal protein uL3 family. Part of the 50S ribosomal subunit. Forms a cluster with proteins L14 and L19. Post-translationally, methylated by PrmB.

In terms of biological role, one of the primary rRNA binding proteins, it binds directly near the 3'-end of the 23S rRNA, where it nucleates assembly of the 50S subunit. The polypeptide is Large ribosomal subunit protein uL3 (Methylorubrum populi (strain ATCC BAA-705 / NCIMB 13946 / BJ001) (Methylobacterium populi)).